The chain runs to 423 residues: Aspartate--tRNA(Asp) ligase (423 aa).

Glu163 serves as a coordination point for L-aspartate. The interval 185–188 is aspartate; the sequence is QLYK. Arg207 is an L-aspartate binding site. Residues 207 to 209, 215 to 217, and Glu346 contribute to the ATP site; these read RAE and RHL. Glu346 and Ser349 together coordinate Mg(2+). Ser349 and Arg353 together coordinate L-aspartate. 394–397 contributes to the ATP binding site; sequence GLER.

Belongs to the class-II aminoacyl-tRNA synthetase family. Type 2 subfamily. In terms of assembly, homodimer. Mg(2+) serves as cofactor.

It localises to the cytoplasm. It catalyses the reaction tRNA(Asp) + L-aspartate + ATP = L-aspartyl-tRNA(Asp) + AMP + diphosphate. In terms of biological role, catalyzes the attachment of L-aspartate to tRNA(Asp) in a two-step reaction: L-aspartate is first activated by ATP to form Asp-AMP and then transferred to the acceptor end of tRNA(Asp). The protein is Aspartate--tRNA(Asp) ligase of Picrophilus torridus (strain ATCC 700027 / DSM 9790 / JCM 10055 / NBRC 100828 / KAW 2/3).